We begin with the raw amino-acid sequence, 548 residues long: Membrane protein insertase YidC (548 aa).

The helical transmembrane segment at 6-26 (NLLVIALLFVSFMIWQAWEQD) threads the bilayer. A disordered region spans residues 28-55 (NPQPQAQQTTQTTTTAAGSAADQGVPAS). The segment covering 30–50 (QPQAQQTTQTTTTAAGSAADQ) has biased composition (low complexity). Transmembrane regions (helical) follow at residues 350 to 370 (FVGN…GIMY), 420 to 440 (LGGC…YYML), 458 to 478 (LSAQ…MFFI), and 499 to 519 (PVIF…YYIV).

The protein belongs to the OXA1/ALB3/YidC family. Type 1 subfamily. In terms of assembly, interacts with the Sec translocase complex via SecD. Specifically interacts with transmembrane segments of nascent integral membrane proteins during membrane integration.

The protein localises to the cell inner membrane. Functionally, required for the insertion and/or proper folding and/or complex formation of integral membrane proteins into the membrane. Involved in integration of membrane proteins that insert both dependently and independently of the Sec translocase complex, as well as at least some lipoproteins. Aids folding of multispanning membrane proteins. This chain is Membrane protein insertase YidC, found in Escherichia coli O127:H6 (strain E2348/69 / EPEC).